Here is a 247-residue protein sequence, read N- to C-terminus: Thioredoxin reductase-like selenoprotein T homolog selt-1.1 (247 aa).

The signal sequence occupies residues 1–26 (MSRFGVFIIGVLFFMSVCDVLRTVSA). Cys-92 and Cys-95 are joined by a disulfide.

Belongs to the SelWTH family. SELT subfamily. Broadly expressed in neurons of nervous system including ADL, ASH, ASI, ASJ, ASK and AWB amphid sensilla neurons, in epithelial cells including hypodermal, arcade, pharyngeal, vulval and rectal cells, and in somatic muscle cells of the head, neck and body wall, and non-striated pharyngeal muscles.

Its subcellular location is the endoplasmic reticulum. The enzyme catalyses [thioredoxin]-dithiol + NADP(+) = [thioredoxin]-disulfide + NADPH + H(+). Its function is as follows. Probably has thioredoxin reductase-like oxidoreductase activity. Plays a role in regulating the oxidative stress response, and odorant and pathogenic bacteria avoidance behavior. The polypeptide is Thioredoxin reductase-like selenoprotein T homolog selt-1.1 (Caenorhabditis elegans).